We begin with the raw amino-acid sequence, 68 residues long: Conotoxin Mr3.4 (68 aa).

The signal sequence occupies residues M1–A19. Positions V20 to R49 are excised as a propeptide. Intrachain disulfides connect C53–C67, C54–C63, and C59–C66. P65 is modified (4-hydroxyproline).

The protein belongs to the conotoxin M superfamily. Expressed by the venom duct.

It is found in the secreted. The protein is Conotoxin Mr3.4 of Conus marmoreus (Marble cone).